We begin with the raw amino-acid sequence, 363 residues long: Histidinol-phosphate aminotransferase (363 aa).

K227 carries the post-translational modification N6-(pyridoxal phosphate)lysine.

It belongs to the class-II pyridoxal-phosphate-dependent aminotransferase family. Histidinol-phosphate aminotransferase subfamily. As to quaternary structure, homodimer. Pyridoxal 5'-phosphate is required as a cofactor.

It catalyses the reaction L-histidinol phosphate + 2-oxoglutarate = 3-(imidazol-4-yl)-2-oxopropyl phosphate + L-glutamate. The protein operates within amino-acid biosynthesis; L-histidine biosynthesis; L-histidine from 5-phospho-alpha-D-ribose 1-diphosphate: step 7/9. The sequence is that of Histidinol-phosphate aminotransferase from Akkermansia muciniphila (strain ATCC BAA-835 / DSM 22959 / JCM 33894 / BCRC 81048 / CCUG 64013 / CIP 107961 / Muc).